A 259-amino-acid polypeptide reads, in one-letter code: Acetylglutamate kinase (259 aa).

Substrate-binding positions include 45–46 (GG), Arg-67, and Asn-159.

It belongs to the acetylglutamate kinase family. ArgB subfamily.

It localises to the cytoplasm. The catalysed reaction is N-acetyl-L-glutamate + ATP = N-acetyl-L-glutamyl 5-phosphate + ADP. It functions in the pathway amino-acid biosynthesis; L-arginine biosynthesis; N(2)-acetyl-L-ornithine from L-glutamate: step 2/4. Its function is as follows. Catalyzes the ATP-dependent phosphorylation of N-acetyl-L-glutamate. This is Acetylglutamate kinase from Aeromonas salmonicida (strain A449).